The following is a 396-amino-acid chain: S-adenosylmethionine synthase (396 aa).

H16 is an ATP binding site. D18 is a binding site for Mg(2+). E44 serves as a coordination point for K(+). 2 residues coordinate L-methionine: E57 and Q100. Positions 100-110 (QSPDINQGVDR) are flexible loop. ATP-binding positions include 165 to 167 (DAK), D240, 246 to 247 (RK), A263, and K267. D240 is a binding site for L-methionine. K271 contacts L-methionine.

The protein belongs to the AdoMet synthase family. In terms of assembly, homotetramer; dimer of dimers. Mg(2+) serves as cofactor. Requires K(+) as cofactor.

The protein localises to the cytoplasm. The enzyme catalyses L-methionine + ATP + H2O = S-adenosyl-L-methionine + phosphate + diphosphate. It participates in amino-acid biosynthesis; S-adenosyl-L-methionine biosynthesis; S-adenosyl-L-methionine from L-methionine: step 1/1. Its function is as follows. Catalyzes the formation of S-adenosylmethionine (AdoMet) from methionine and ATP. The overall synthetic reaction is composed of two sequential steps, AdoMet formation and the subsequent tripolyphosphate hydrolysis which occurs prior to release of AdoMet from the enzyme. This chain is S-adenosylmethionine synthase, found in Pseudomonas fluorescens (strain ATCC BAA-477 / NRRL B-23932 / Pf-5).